Here is a 365-residue protein sequence, read N- to C-terminus: Peptidyl-prolyl cis-trans isomerase FKBP42 (365 aa).

Residues methionine 1 to glutamate 15 show a composition bias toward basic and acidic residues. The segment at methionine 1–alanine 44 is disordered. An interaction with MDR1/PGP1 region spans residues methionine 1 to glutamate 163. Residues tyrosine 67 to aspartate 159 form the PPIase FKBP-type domain. The tract at residues glutamate 163–lysine 337 is interaction with MRP1. 3 TPR repeats span residues alanine 179–aspartate 212, asparagine 230–asparagine 263, and proline 264–aspartate 297. The calmodulin-binding stretch occupies residues glutamine 310–phenylalanine 326. Residues serine 338–phenylalanine 357 form a helical; Anchor for type IV membrane protein membrane-spanning segment.

Belongs to the FKBP-type PPIase family. Interacts with calmodulin (CaM), MRP1, MRP2, MDR1/PGP1, MDR11/PGP19 and SHD/HSP90. Interacts with 1-naphthylphthalamic acid (NPA).

The protein resides in the cell membrane. It localises to the vacuole membrane. The protein localises to the endoplasmic reticulum. The catalysed reaction is [protein]-peptidylproline (omega=180) = [protein]-peptidylproline (omega=0). In terms of biological role, PPIases accelerate the folding of proteins. It catalyzes the cis-trans isomerization of proline imidic peptide bonds in oligopeptides. Modulates the uptake of MRP substrates into the vacuole; reduces metolachlor-GS (MOC-GS) and enhances 17-beta-estradiol 17-(beta-D-glucuronide) (E(2)17betaG) uptake. Regulates cell elongation and orientation. Functions as a positive regulator of PGP1-mediated auxin transport. Confers drug modulation of PGP1 efflux activity as interaction with NPA or flavonol quercetin prevents its physical and functional interaction with PGP1. Required for the proper localization of auxin-related ABCB transporters. Plays a role in brassinosteroid (BR) signaling pathway. Required for seed development by promoting stamen elongation and, to a lesser extent, anther dehiscence and pollen maturation, probably as a chaperone helping ABCB1 and ABCB19 auxin transporters localization and activation. Involved in auxin signaling in nectaries to promote starch accumulation to attract visiting pollinators. In Arabidopsis thaliana (Mouse-ear cress), this protein is Peptidyl-prolyl cis-trans isomerase FKBP42.